The primary structure comprises 451 residues: Phosphoglucosamine mutase (451 aa).

Serine 101 functions as the Phosphoserine intermediate in the catalytic mechanism. Positions 101, 240, 242, and 244 each coordinate Mg(2+). Residue serine 101 is modified to Phosphoserine.

This sequence belongs to the phosphohexose mutase family. Mg(2+) is required as a cofactor. Activated by phosphorylation.

The enzyme catalyses alpha-D-glucosamine 1-phosphate = D-glucosamine 6-phosphate. Functionally, catalyzes the conversion of glucosamine-6-phosphate to glucosamine-1-phosphate. The polypeptide is Phosphoglucosamine mutase (Thioalkalivibrio sulfidiphilus (strain HL-EbGR7)).